The primary structure comprises 228 residues: NAD(P)H-hydrate epimerase (228 aa).

The 206-residue stretch at 9–214 (AQNIDQELFN…DLLLKKYELE (206 aa)) folds into the YjeF N-terminal domain. 60-64 (NNGGD) provides a ligand contact to (6S)-NADPHX. The K(+) site is built by asparagine 61 and aspartate 125. (6S)-NADPHX-binding positions include 129–135 (GFSFKGE) and aspartate 158. Serine 161 is a K(+) binding site.

It belongs to the NnrE/AIBP family. K(+) serves as cofactor.

The enzyme catalyses (6R)-NADHX = (6S)-NADHX. It carries out the reaction (6R)-NADPHX = (6S)-NADPHX. Its function is as follows. Catalyzes the epimerization of the S- and R-forms of NAD(P)HX, a damaged form of NAD(P)H that is a result of enzymatic or heat-dependent hydration. This is a prerequisite for the S-specific NAD(P)H-hydrate dehydratase to allow the repair of both epimers of NAD(P)HX. The polypeptide is NAD(P)H-hydrate epimerase (Nematostella vectensis (Starlet sea anemone)).